The sequence spans 157 residues: ATP synthase subunit b' (157 aa).

The chain crosses the membrane as a helical span at residues 22 to 42; sequence ATLPIIAVQFLLLVAVLNSLF.

The protein belongs to the ATPase B chain family. In terms of assembly, F-type ATPases have 2 components, F(1) - the catalytic core - and F(0) - the membrane proton channel. F(1) has five subunits: alpha(3), beta(3), gamma(1), delta(1), epsilon(1). F(0) has four main subunits: a(1), b(1), b'(1) and c(10-14). The alpha and beta chains form an alternating ring which encloses part of the gamma chain. F(1) is attached to F(0) by a central stalk formed by the gamma and epsilon chains, while a peripheral stalk is formed by the delta, b and b' chains.

Its subcellular location is the cellular thylakoid membrane. In terms of biological role, f(1)F(0) ATP synthase produces ATP from ADP in the presence of a proton or sodium gradient. F-type ATPases consist of two structural domains, F(1) containing the extramembraneous catalytic core and F(0) containing the membrane proton channel, linked together by a central stalk and a peripheral stalk. During catalysis, ATP synthesis in the catalytic domain of F(1) is coupled via a rotary mechanism of the central stalk subunits to proton translocation. Component of the F(0) channel, it forms part of the peripheral stalk, linking F(1) to F(0). The b'-subunit is a diverged and duplicated form of b found in plants and photosynthetic bacteria. This is ATP synthase subunit b' from Synechococcus sp. (strain JA-3-3Ab) (Cyanobacteria bacterium Yellowstone A-Prime).